The following is a 465-amino-acid chain: Uronate isomerase (465 aa).

The protein belongs to the metallo-dependent hydrolases superfamily. Uronate isomerase family.

It catalyses the reaction D-glucuronate = D-fructuronate. The catalysed reaction is aldehydo-D-galacturonate = keto-D-tagaturonate. It functions in the pathway carbohydrate metabolism; pentose and glucuronate interconversion. This is Uronate isomerase from Streptococcus equi subsp. equi (strain 4047).